We begin with the raw amino-acid sequence, 115 residues long: MKFVLLFGVLLVTLFSYSSAEMLDDFHQADEDELVSLIKKEEARAKECTPRFYDCSHDRHICCRSELFKDVCTCFYPEGGDNEVCTCQQPKHLKYMEKAAGKAKKFGGKIKKWFG.

An N-terminal signal peptide occupies residues Met1 to Ala20. The propeptide occupies Glu21 to Arg44. 4 disulfides stabilise this stretch: Cys48–Cys63, Cys55–Cys72, Cys62–Cys87, and Cys74–Cys85.

This sequence belongs to the neurotoxin 19 (CSTX) family. 01 subfamily. As to expression, expressed by the venom gland.

The protein localises to the secreted. The sequence is that of U3-lycotoxin-Ls1r from Lycosa singoriensis (Wolf spider).